A 522-amino-acid chain; its full sequence is O-fucosyltransferase 38 (522 aa).

A helical; Signal-anchor for type II membrane protein membrane pass occupies residues 26-46 (AISLYLIFVFAFTIWVLVFSS). A compositionally biased stretch (basic and acidic residues) spans 54–67 (DHTKHQQQHHRDLI). A disordered region spans residues 54 to 73 (DHTKHQQQHHRDLIDSESFP). N147 carries N-linked (GlcNAc...) asparagine glycosylation. Residue 284–286 (HLR) coordinates substrate. N-linked (GlcNAc...) asparagine glycosylation occurs at N325. The tract at residues 475–496 (HKDRQGAPRRRKGPTQGIKGRA) is disordered.

It belongs to the glycosyltransferase GT106 family.

It is found in the membrane. The protein operates within glycan metabolism. The polypeptide is O-fucosyltransferase 38 (Arabidopsis thaliana (Mouse-ear cress)).